We begin with the raw amino-acid sequence, 385 residues long: Glycine/sarcosine/betaine reductase complex component C subunit alpha (385 aa).

Residue Cys359 is part of the active site.

In terms of assembly, heterooctamer of four alpha and four beta subunits. Component of the glycine, sarcosine and betaine reductase complexes, together with proteins A and B.

The enzyme catalyses acetyl phosphate + [thioredoxin]-disulfide + NH4(+) + H2O = [thioredoxin]-dithiol + glycine + phosphate + H(+). It carries out the reaction acetyl phosphate + methylamine + [thioredoxin]-disulfide + H2O = sarcosine + [thioredoxin]-dithiol + phosphate + H(+). It catalyses the reaction acetyl phosphate + trimethylamine + [thioredoxin]-disulfide + H2O = glycine betaine + [thioredoxin]-dithiol + phosphate + H(+). Its function is as follows. In the first step of glycine, betaine and sarcosine reductases, the substrate is bound to component PB via a Schiff base intermediate. Then the PB-activated substrate is nucleophilically attacked by the selenol anion of component PA to transform it to a carboxymethylated selenoether and the respective amine. By action of component PC, acetyl phosphate is formed, leaving component PA in its oxidized state. Finally component PA becomes reduced by the thioredoxin system to start a new catalytic cycle of reductive deamination. This chain is Glycine/sarcosine/betaine reductase complex component C subunit alpha (grdD), found in Peptoclostridium acidaminophilum (Eubacterium acidaminophilum).